Reading from the N-terminus, the 624-residue chain is Double-stranded RNA-binding protein Staufen homolog 2 (624 aa).

DRBM domains follow at residues Ser-55–Ala-122, Gln-142–Ser-228, Met-254–Gly-321, Arg-354–Gln-422, and Leu-540–Asp-604. Residues Leu-197–Asn-223 form a disordered region. The segment covering Arg-214–Asn-223 has biased composition (basic and acidic residues). Disordered stretches follow at residues Glu-401–Gly-428 and Pro-592–Val-624. Positions Gln-415–Pro-426 are enriched in polar residues. Over residues Ala-596 to Asn-605 the composition is skewed to basic and acidic residues.

RNA-binding protein required for the microtubule-dependent transport of RNAs within polarized cell types. This is Double-stranded RNA-binding protein Staufen homolog 2 (stau2) from Xenopus tropicalis (Western clawed frog).